The primary structure comprises 478 residues: Nuclear distribution protein PAC1 (478 aa).

The region spanning 9 to 41 is the LisH domain; the sequence is QAEELHKAMIAYLLSANLPKSAAALREELADSV. Positions 60–87 form a coiled coil; the sequence is TSVVRLQKKIMDLESRNNALQSELDSAT. 8 WD repeats span residues 113–154, 156–196, 200–247, 250–289, 292–352, 354–393, 398–439, and 440–477; these read SHRE…RTIK, HTKA…KNIR, GHDH…CVKT, GHVDWVRDVAASPDGRFLFSAGNDQVARLWDVSSGETKST, GHEH…IKTL, GHDNWVRALAFHPGGKYLLSVSDDKTLRCWDLTQECKCVR, AHGH…AASA, and INGVVPTGKKEDPGGGPMMGIRCVIATGSVDLKVRVFA.

Belongs to the WD repeat LIS1/nudF family. In terms of assembly, self-associates. Interacts with NDL1 and dynein.

It localises to the cytoplasm. The protein resides in the cytoskeleton. It is found in the spindle pole. Functionally, positively regulates the activity of the minus-end directed microtubule motor protein dynein. May enhance dynein-mediated microtubule sliding by targeting dynein to the microtubule plus end. Required for nuclear migration during vegetative growth as well as development. Required for retrograde early endosome (EE) transport from the hyphal tip. Required for localization of dynein to the mitotic spindle poles. Recruits additional proteins to the dynein complex at SPBs. The protein is Nuclear distribution protein PAC1 of Paracoccidioides brasiliensis (strain Pb18).